The primary structure comprises 148 residues: Putative pre-16S rRNA nuclease (148 aa).

The protein belongs to the YqgF nuclease family.

The protein localises to the cytoplasm. Functionally, could be a nuclease involved in processing of the 5'-end of pre-16S rRNA. This chain is Putative pre-16S rRNA nuclease, found in Chlamydia trachomatis serovar A (strain ATCC VR-571B / DSM 19440 / HAR-13).